Consider the following 351-residue polypeptide: Glycerol-3-phosphate dehydrogenase 1-like protein (351 aa).

Glycine 11–glycine 16 contributes to the NAD(+) binding site. A substrate-binding site is contributed by lysine 121. Alanine 154 is an NAD(+) binding site. Catalysis depends on lysine 205, which acts as the Proton acceptor. NAD(+)-binding residues include arginine 271, lysine 298, and glutamine 300. Residue arginine 271–asparagine 272 coordinates substrate.

This sequence belongs to the NAD-dependent glycerol-3-phosphate dehydrogenase family.

Its subcellular location is the cytoplasm. It carries out the reaction sn-glycerol 3-phosphate + NAD(+) = dihydroxyacetone phosphate + NADH + H(+). Its function is as follows. Plays a role in regulating cardiac sodium current. The protein is Glycerol-3-phosphate dehydrogenase 1-like protein (gpd1l) of Danio rerio (Zebrafish).